We begin with the raw amino-acid sequence, 60 residues long: Naniproin (60 aa).

Disulfide bonds link Cys3/Cys21, Cys14/Cys38, Cys42/Cys53, and Cys54/Cys59.

Belongs to the three-finger toxin family. Short-chain subfamily. Type IA cytotoxin sub-subfamily. In terms of assembly, monomer in solution; Homodimer and oligomer in the presence of negatively charged lipids forming a pore with a size ranging between 20 and 30 angstroms. As to expression, expressed by the venom gland.

It is found in the secreted. Its subcellular location is the target cell membrane. Basic protein that binds to cell membrane and depolarizes cardiomyocytes. This cytotoxin also possesses lytic activity on many other cells, including red blood cells. Interaction with sulfatides in the cell membrane induces pore formation and cell internalization and is responsible for cytotoxicity in cardiomyocytes. It targets the mitochondrial membrane and induces mitochondrial swelling and fragmentation. Inhibits protein kinases C. It binds to the integrin alpha-V/beta-3 with a moderate affinity. The chain is Naniproin from Naja nigricollis (Black-necked spitting cobra).